A 635-amino-acid polypeptide reads, in one-letter code: Threonine--tRNA ligase (635 aa).

Positions 1 to 61 constitute a TGS domain; it reads MPIITLPDGN…EKDANIAIIT (61 aa). The segment at 242-533 is catalytic; sequence DHRKIGKQLD…LTEEYAGVYP (292 aa). Zn(2+) is bound by residues C333, H384, and H510.

Belongs to the class-II aminoacyl-tRNA synthetase family. As to quaternary structure, homodimer. Zn(2+) serves as cofactor.

The protein localises to the cytoplasm. The catalysed reaction is tRNA(Thr) + L-threonine + ATP = L-threonyl-tRNA(Thr) + AMP + diphosphate + H(+). Its function is as follows. Catalyzes the attachment of threonine to tRNA(Thr) in a two-step reaction: L-threonine is first activated by ATP to form Thr-AMP and then transferred to the acceptor end of tRNA(Thr). Also edits incorrectly charged L-seryl-tRNA(Thr). This chain is Threonine--tRNA ligase, found in Psychromonas ingrahamii (strain DSM 17664 / CCUG 51855 / 37).